A 186-amino-acid chain; its full sequence is Glutathione-independent glyoxalase DJR-1.2 (186 aa).

Active-site residues include Glu-20, Cys-105, and His-124.

Belongs to the peptidase C56 family. DJ-1 subfamily. Expressed in various tissues, including pharyngeal muscles, pharynx-intestinal valve, ventral nerve cord, spermatheca, rectal gland, inner labial (IL) cells of head neurons, phasmid (PHA/PHB) neurons in tail and supporting sheath/socket cells, as well as in head mesodermal cells (HMC), excretory canals and coelomocytes.

It is found in the cytoplasm. The catalysed reaction is methylglyoxal + H2O = (R)-lactate + H(+). Its function is as follows. Catalyzes the conversion of methylglyoxal (MG) or glyoxal (GO) to D-lactate or glycolic acid respectively in a single glutathione (GSH)-independent step. May play a role in detoxifying endogenously produced glyoxals. Involved in protection against glyoxal-induced cell death. Protects dopaminergic neurons from glyoxal-dependent neuronal degeneration. The chain is Glutathione-independent glyoxalase DJR-1.2 from Caenorhabditis elegans.